The primary structure comprises 177 residues: ATP synthase subunit delta (177 aa).

It belongs to the ATPase delta chain family. In terms of assembly, F-type ATPases have 2 components, F(1) - the catalytic core - and F(0) - the membrane proton channel. F(1) has five subunits: alpha(3), beta(3), gamma(1), delta(1), epsilon(1). F(0) has three main subunits: a(1), b(2) and c(10-14). The alpha and beta chains form an alternating ring which encloses part of the gamma chain. F(1) is attached to F(0) by a central stalk formed by the gamma and epsilon chains, while a peripheral stalk is formed by the delta and b chains.

It is found in the cell inner membrane. In terms of biological role, f(1)F(0) ATP synthase produces ATP from ADP in the presence of a proton or sodium gradient. F-type ATPases consist of two structural domains, F(1) containing the extramembraneous catalytic core and F(0) containing the membrane proton channel, linked together by a central stalk and a peripheral stalk. During catalysis, ATP synthesis in the catalytic domain of F(1) is coupled via a rotary mechanism of the central stalk subunits to proton translocation. Functionally, this protein is part of the stalk that links CF(0) to CF(1). It either transmits conformational changes from CF(0) to CF(1) or is implicated in proton conduction. The protein is ATP synthase subunit delta of Shewanella sediminis (strain HAW-EB3).